Here is a 166-residue protein sequence, read N- to C-terminus: uncharacterized protein (166 aa).

The tract at residues 1-58 is may interact with smn1; that stretch reads MSSEITEGDLQKFHDEHFNAKAVNLWNVAFAQNDRGGNSESANVEYTQSVERYPDGTI.

In terms of assembly, part of the core SMN complex at least composed of smn1, yip11/gem2, gem6, gem7 and gem8. Interacts with smn1; the interaction is direct. Interacts with gem7; the interaction is direct.

The protein resides in the cytoplasm. Its subcellular location is the nucleus. In terms of biological role, the SMN complex catalyzes the assembly of small nuclear ribonucleoproteins (snRNPs), the building blocks of the spliceosome, and thereby plays an important role in the splicing of cellular pre-mRNAs. Most spliceosomal snRNPs contain a common set of Sm proteins SNRPB, SNRPD1, SNRPD2, SNRPD3, SNRPE, SNRPF and SNRPG that assemble in a heptameric protein ring on the Sm site of the small nuclear RNA to form the core snRNP (Sm core). In the cytosol, the Sm proteins SNRPD1, SNRPD2, SNRPE, SNRPF and SNRPG are trapped in an inactive 6S pICln-Sm complex by the chaperone CLNS1A that controls the assembly of the core snRNP. To assemble core snRNPs, the SMN complex accepts the trapped 5Sm proteins from CLNS1A forming an intermediate. Binding of snRNA inside 5Sm triggers eviction of the SMN complex, thereby allowing binding of SNRPD3 and SNRPB to complete assembly of the core snRNP. This is an uncharacterized protein from Schizosaccharomyces pombe (strain 972 / ATCC 24843) (Fission yeast).